The following is a 357-amino-acid chain: Vomeronasal type-1 receptor 5 (357 aa).

Topologically, residues 1–3 (MLK) are extracellular. Residues 4-24 (LVIIENMAEIMLFSLDLLLFS) traverse the membrane as a helical segment. The Cytoplasmic portion of the chain corresponds to 25–52 (TDILCFNFPSKMIKLPGFITIQIFFYPQ). Residues 53 to 73 (ASFGISANTILLLFHIFTFVF) form a helical membrane-spanning segment. At 74–81 (SHRSKSID) the chain is on the extracellular side. The helical transmembrane segment at 82 to 102 (MIISHLSLIHILLLFTQAILV) threads the bilayer. Residues 103–130 (SLDFFGSQNTQDDLRYKVIVFLNKVMRG) lie on the Cytoplasmic side of the membrane. Residues 131–151 (LSICTPCLLSVLQAIISPSIF) form a helical membrane-spanning segment. Residues 152–163 (SLAKLKHPSASH) lie on the Extracellular side of the membrane. The helical transmembrane segment at 164–184 (ILGFFLFSWVLNMFIGVIFCC) threads the bilayer. Residues 185-269 (TLRLPPVKRG…RVSPVKRASQ (85 aa)) lie on the Cytoplasmic side of the membrane. The helical transmembrane segment at 270-290 (AILLLVSFVFTYWVDFTFSFS) threads the bilayer. Residues 291–300 (GGVTWINDSL) are Extracellular-facing. An N-linked (GlcNAc...) asparagine glycan is attached at Asn297. Residues 301 to 321 (LVWLQVIVANSYAAISPLMLI) traverse the membrane as a helical segment. At 322-357 (YADNQIFKTLQMLWFKYLSPPKLMLKFNRQCGSTKK) the chain is on the cytoplasmic side.

It belongs to the G-protein coupled receptor 1 family.

It localises to the cell membrane. In terms of biological role, putative pheromone receptor. This is Vomeronasal type-1 receptor 5 (VN1R5) from Homo sapiens (Human).